A 521-amino-acid polypeptide reads, in one-letter code: CD166 antigen (521 aa).

Topologically, residues 1-465 (GSPVFIAFRS…NREKVNDQAK (465 aa)) are extracellular. Residues Asn-29, Asn-33, Asn-105, Asn-203, Asn-244, Asn-299, Asn-395, Asn-418, and Asn-437 are each glycosylated (N-linked (GlcNAc...) asparagine). An Ig-like V-type 2 domain is found at 63–172 (PTVVKVFKQP…YGPSGQKTVH (110 aa)). An intrachain disulfide couples Cys-95 to Cys-158. 3 consecutive Ig-like C2-type domains span residues 183 to 266 (PTEQ…TAIT), 271 to 347 (DLSL…ESLT), and 354 to 439 (PQIK…LNVS). Disulfide bonds link Cys-208/Cys-251, Cys-292/Cys-330, and Cys-373/Cys-423. Residues 466–487 (LIVGIVVGLLLAALVAGVVYWL) traverse the membrane as a helical segment. Over 488-521 (YMKKSKTASKHVNKDLGNMEENKKLEENNHKTEA) the chain is Cytoplasmic. The segment at 500 to 521 (NKDLGNMEENKKLEENNHKTEA) is disordered. Residues 507–521 (EENKKLEENNHKTEA) are compositionally biased toward basic and acidic residues.

Homodimer. Interacts (via extracellular domain) with CD6 (via extracellular domain). Homodimerization and interaction with CD6 involve the same region and cannot occur simultaneously. The affinity for CD6 is much higher than the affinity for self-association. Interacts (via glycosylated extracellular domain) with LGALS1 and LGALS3. Interaction with LGALS1 or LGALS3 inhibits interaction with CD6. Post-translationally, glycosylated.

The protein localises to the cell membrane. It is found in the cell projection. Its subcellular location is the axon. It localises to the dendrite. Functionally, cell adhesion molecule that mediates both heterotypic cell-cell contacts via its interaction with CD6, as well as homotypic cell-cell contacts. Promotes T-cell activation and proliferation via its interactions with CD6. Contributes to the formation and maturation of the immunological synapse via its interactions with CD6. Mediates homotypic interactions with cells that express ALCAM. Mediates attachment of dendritic cells onto endothelial cells via homotypic interaction. Inhibits endothelial cell migration and promotes endothelial tube formation via homotypic interactions. Required for normal organization of the lymph vessel network. Required for normal hematopoietic stem cell engraftment in the bone marrow. Plays a role in hematopoiesis; required for normal numbers of hematopoietic stem cells in bone marrow. Promotes in vitro osteoblast proliferation and differentiation. Promotes neurite extension, axon growth and axon guidance; axons grow preferentially on surfaces that contain ALCAM. Mediates outgrowth and pathfinding for retinal ganglion cell axons. In Oryctolagus cuniculus (Rabbit), this protein is CD166 antigen (ALCAM).